We begin with the raw amino-acid sequence, 236 residues long: Enolase-phosphatase E1 (236 aa).

This sequence belongs to the HAD-like hydrolase superfamily. MasA/MtnC family. As to quaternary structure, monomer. It depends on Mg(2+) as a cofactor.

It carries out the reaction 5-methylsulfanyl-2,3-dioxopentyl phosphate + H2O = 1,2-dihydroxy-5-(methylsulfanyl)pent-1-en-3-one + phosphate. It functions in the pathway amino-acid biosynthesis; L-methionine biosynthesis via salvage pathway; L-methionine from S-methyl-5-thio-alpha-D-ribose 1-phosphate: step 3/6. It participates in amino-acid biosynthesis; L-methionine biosynthesis via salvage pathway; L-methionine from S-methyl-5-thio-alpha-D-ribose 1-phosphate: step 4/6. Functionally, bifunctional enzyme that catalyzes the enolization of 2,3-diketo-5-methylthiopentyl-1-phosphate (DK-MTP-1-P) into the intermediate 2-hydroxy-3-keto-5-methylthiopentenyl-1-phosphate (HK-MTPenyl-1-P), which is then dephosphorylated to form the acireductone 1,2-dihydroxy-3-keto-5-methylthiopentene (DHK-MTPene). The sequence is that of Enolase-phosphatase E1 from Frankia alni (strain DSM 45986 / CECT 9034 / ACN14a).